The chain runs to 285 residues: (3S)-malyl-CoA thioesterase (285 aa).

Residues arginine 70 and glutamate 122 each contribute to the substrate site. Residues glutamate 122 and aspartate 148 each contribute to the Mg(2+) site.

Belongs to the HpcH/HpaI aldolase family. Homodimer or homotrimer. It depends on Mg(2+) as a cofactor.

The enzyme catalyses (S)-malyl-CoA + H2O = (S)-malate + CoA + H(+). Its activity is regulated as follows. Reversibly inhibited by EDTA. Stimulated by the divalent cations Mg(2+) and Mn(2+). In terms of biological role, catalyzes the hydrolysis of (3S)-malyl-CoA to (3S)-malate and free CoA. Inactive towards beta-methylmalyl-CoA and other CoA esters. The protein is (3S)-malyl-CoA thioesterase of Cereibacter sphaeroides (strain ATCC 17023 / DSM 158 / JCM 6121 / CCUG 31486 / LMG 2827 / NBRC 12203 / NCIMB 8253 / ATH 2.4.1.) (Rhodobacter sphaeroides).